A 101-amino-acid chain; its full sequence is Small ribosomal subunit protein uS14 (101 aa).

The protein belongs to the universal ribosomal protein uS14 family. As to quaternary structure, part of the 30S ribosomal subunit. Contacts proteins S3 and S10.

In terms of biological role, binds 16S rRNA, required for the assembly of 30S particles and may also be responsible for determining the conformation of the 16S rRNA at the A site. This is Small ribosomal subunit protein uS14 from Ehrlichia chaffeensis (strain ATCC CRL-10679 / Arkansas).